Reading from the N-terminus, the 83-residue chain is MSGSTGERSFADIITSIRYWVIHSITIPSLFIAGWLFVSTGLAYDVFGSPRPNEYFTESRQGIPLITGRFDPLEQLDEFSRSF.

A helical membrane pass occupies residues 21–35 (VIHSITIPSLFIAGW). His-23 lines the heme pocket.

This sequence belongs to the PsbE/PsbF family. As to quaternary structure, heterodimer of an alpha subunit and a beta subunit. PSII is composed of 1 copy each of membrane proteins PsbA, PsbB, PsbC, PsbD, PsbE, PsbF, PsbH, PsbI, PsbJ, PsbK, PsbL, PsbM, PsbT, PsbX, PsbY, PsbZ, Psb30/Ycf12, at least 3 peripheral proteins of the oxygen-evolving complex and a large number of cofactors. It forms dimeric complexes. Heme b serves as cofactor.

It localises to the plastid. It is found in the chloroplast thylakoid membrane. Its function is as follows. This b-type cytochrome is tightly associated with the reaction center of photosystem II (PSII). PSII is a light-driven water:plastoquinone oxidoreductase that uses light energy to abstract electrons from H(2)O, generating O(2) and a proton gradient subsequently used for ATP formation. It consists of a core antenna complex that captures photons, and an electron transfer chain that converts photonic excitation into a charge separation. This chain is Cytochrome b559 subunit alpha, found in Piper cenocladum (Ant piper).